The primary structure comprises 535 residues: MAKKVAVIGAGVSGLISLKCCVDEGLEPTCFERTEDIGGLWRFKENVEDGRASIYKSVITNTSKEMSCFSDFPMPEDFPNFLHNSKLLEYFRLFAKKFDLLKYIQFQTTVLTVKKHPDFSSSGQWEVVTQSDGKEQSAVFDAVMVCSGHHILPHIPLKSFPGIERFKGQYFHSRQYKHPAGFEGKRILVIGIGNSASDIASELSKNAAQVFISTRNGSWVMSRISEDGYPWDMVFHTRFKSMLRNILPRTVSKWMMEQQLNRWFNHANYSLEPKNKYLMKEPILNDDLPSRILYGAVKVKSRVTQLTETSALFEDGTVEEDIDVIVFATGYTFSFPFLEESLVKIEHNMVSLYKYMFPPQLEKPTLTCMGLIQPLGSIFPTVELQARWATRVFKGLCHLPSEKTMMEDIIKRNEKRIDLFGESQSQIVQTNYVDYLDELALEIGAKPDLISFLLKDPELAVKLCFGPCNSYQYRLVGPGQWEGARRAILTQKQRILKPLKTRSVKAAPNLSASFLMKILALVAVFVAFFSQLYGF.

Ala-2 carries the N-acetylalanine modification. FAD is bound by residues 9–13 (GAGVS), Glu-32, 40–41 (LW), and 61–62 (NT). Residues 60 to 61 (TN) and 195 to 198 (SASD) contribute to the NADP(+) site. Lys-492 is covalently cross-linked (Glycyl lysine isopeptide (Lys-Gly) (interchain with G-Cter in SUMO)). The helical transmembrane segment at 510–530 (LSASFLMKILALVAVFVAFFS) threads the bilayer.

This sequence belongs to the FMO family. FAD is required as a cofactor. The cofactor is Mg(2+). As to expression, lung.

The protein resides in the microsome membrane. Its subcellular location is the endoplasmic reticulum membrane. Functionally, catalyzes the oxidative metabolism of numerous xenobiotics, including mainly therapeutic drugs and insecticides that contain a soft nucleophile, most commonly nitrogen and sulfur and participates to their bioactivation. This is Dimethylaniline monooxygenase [N-oxide-forming] 2 from Cavia porcellus (Guinea pig).